The sequence spans 505 residues: ATP synthase subunit alpha (505 aa).

An ATP-binding site is contributed by 169-176; the sequence is GDRQTGKT.

Belongs to the ATPase alpha/beta chains family. In terms of assembly, F-type ATPases have 2 components, CF(1) - the catalytic core - and CF(0) - the membrane proton channel. CF(1) has five subunits: alpha(3), beta(3), gamma(1), delta(1), epsilon(1). CF(0) has three main subunits: a(1), b(2) and c(9-12). The alpha and beta chains form an alternating ring which encloses part of the gamma chain. CF(1) is attached to CF(0) by a central stalk formed by the gamma and epsilon chains, while a peripheral stalk is formed by the delta and b chains.

The protein localises to the cell membrane. It carries out the reaction ATP + H2O + 4 H(+)(in) = ADP + phosphate + 5 H(+)(out). In terms of biological role, produces ATP from ADP in the presence of a proton gradient across the membrane. The alpha chain is a regulatory subunit. The protein is ATP synthase subunit alpha of Alkaliphilus metalliredigens (strain QYMF).